We begin with the raw amino-acid sequence, 497 residues long: Homeotic protein empty spiracles (497 aa).

3 disordered regions span residues 34–117 (NDVS…HLSP), 161–262 (SPLQ…MMMP), and 441–497 (NRRT…DASH). The segment covering 35–50 (DVSTAGGNSTPDLSGP) has biased composition (polar residues). The span at 51–68 (QSPPPGERNVPGSPPQTP) shows a compositional bias: pro residues. The segment covering 96 to 117 (PHAQQQQQQHLQAPHPHPHLSP) has biased composition (low complexity). The span at 161–176 (SPLQTRLSPETEQPQM) shows a compositional bias: polar residues. 2 stretches are compositionally biased toward low complexity: residues 208 to 239 (PKSV…QQQQ) and 248 to 262 (PAMM…MMMP). The homeobox DNA-binding region spans 391–450 (PKRIRTAFSPSQLLKLEHAFESNQYVVGAERKALAQNLNLSETQVKVWFQNRRTKHKRMQ). Positions 470 to 497 (GDEDDDELIDMEMDECPSDEEHELDASH) are enriched in acidic residues.

This sequence belongs to the EMX homeobox family.

The protein localises to the nucleus. Functionally, acts as a homeotic selector gene controlling antennal and mandibular segment identity. This Drosophila melanogaster (Fruit fly) protein is Homeotic protein empty spiracles (ems).